We begin with the raw amino-acid sequence, 215 residues long: Thiamine-phosphate synthase (215 aa).

4-amino-2-methyl-5-(diphosphooxymethyl)pyrimidine is bound by residues 40–44 and asparagine 72; that span reads QLRIK. The Mg(2+) site is built by aspartate 73 and aspartate 92. Serine 111 contributes to the 4-amino-2-methyl-5-(diphosphooxymethyl)pyrimidine binding site. 2-[(2R,5Z)-2-carboxy-4-methylthiazol-5(2H)-ylidene]ethyl phosphate is bound at residue 137-139; the sequence is TTT. 4-amino-2-methyl-5-(diphosphooxymethyl)pyrimidine is bound at residue lysine 140. 2-[(2R,5Z)-2-carboxy-4-methylthiazol-5(2H)-ylidene]ethyl phosphate contacts are provided by residues glycine 169 and 189–190; that span reads VS.

Belongs to the thiamine-phosphate synthase family. Requires Mg(2+) as cofactor.

It carries out the reaction 2-[(2R,5Z)-2-carboxy-4-methylthiazol-5(2H)-ylidene]ethyl phosphate + 4-amino-2-methyl-5-(diphosphooxymethyl)pyrimidine + 2 H(+) = thiamine phosphate + CO2 + diphosphate. It catalyses the reaction 2-(2-carboxy-4-methylthiazol-5-yl)ethyl phosphate + 4-amino-2-methyl-5-(diphosphooxymethyl)pyrimidine + 2 H(+) = thiamine phosphate + CO2 + diphosphate. The catalysed reaction is 4-methyl-5-(2-phosphooxyethyl)-thiazole + 4-amino-2-methyl-5-(diphosphooxymethyl)pyrimidine + H(+) = thiamine phosphate + diphosphate. The protein operates within cofactor biosynthesis; thiamine diphosphate biosynthesis; thiamine phosphate from 4-amino-2-methyl-5-diphosphomethylpyrimidine and 4-methyl-5-(2-phosphoethyl)-thiazole: step 1/1. Functionally, condenses 4-methyl-5-(beta-hydroxyethyl)thiazole monophosphate (THZ-P) and 2-methyl-4-amino-5-hydroxymethyl pyrimidine pyrophosphate (HMP-PP) to form thiamine monophosphate (TMP). This is Thiamine-phosphate synthase from Proteus mirabilis (strain HI4320).